The primary structure comprises 174 residues: ATP synthase subunit b (174 aa).

Residues 9–29 (LPNTSLIFWEVVTFLILLALL) traverse the membrane as a helical segment.

It belongs to the ATPase B chain family. As to quaternary structure, F-type ATPases have 2 components, F(1) - the catalytic core - and F(0) - the membrane proton channel. F(1) has five subunits: alpha(3), beta(3), gamma(1), delta(1), epsilon(1). F(0) has three main subunits: a(1), b(2) and c(10-14). The alpha and beta chains form an alternating ring which encloses part of the gamma chain. F(1) is attached to F(0) by a central stalk formed by the gamma and epsilon chains, while a peripheral stalk is formed by the delta and b chains.

It is found in the cell membrane. Functionally, f(1)F(0) ATP synthase produces ATP from ADP in the presence of a proton or sodium gradient. F-type ATPases consist of two structural domains, F(1) containing the extramembraneous catalytic core and F(0) containing the membrane proton channel, linked together by a central stalk and a peripheral stalk. During catalysis, ATP synthesis in the catalytic domain of F(1) is coupled via a rotary mechanism of the central stalk subunits to proton translocation. In terms of biological role, component of the F(0) channel, it forms part of the peripheral stalk, linking F(1) to F(0). The polypeptide is ATP synthase subunit b (Rubrobacter xylanophilus (strain DSM 9941 / JCM 11954 / NBRC 16129 / PRD-1)).